A 417-amino-acid polypeptide reads, in one-letter code: COP9 signalosome complex subunit 7a (417 aa).

The region spanning 2–179 (EQTKALNALE…EMVQINSVAA (178 aa)) is the PCI domain. The tract at residues 240-417 (DEQKGAVPSS…KRGSKRKLTA (178 aa)) is disordered. Residues 263–290 (RGGGGGGDGAGAGGSFRGSGYSRGGGLS) are compositionally biased toward gly residues. Composition is skewed to low complexity over residues 291-311 (QGYRSSQRGSHQQHQNQSRQQ), 320-330 (SNQSGTNSLLT), and 343-352 (PSAVSPSAAA). A compositionally biased stretch (gly residues) spans 367–379 (METGSGSGSGPLG). The segment covering 385-405 (DMDDSEEDIDDDTMDLDDEGD) has biased composition (acidic residues).

This sequence belongs to the CSN7/EIF3M family. CSN7 subfamily. Component of the COP9 signalosome (CSN) complex.

It localises to the cytoplasm. Its subcellular location is the nucleus. Functionally, component of the COP9 signalosome (CSN) complex that acts as an regulator of the ubiquitin (Ubl) conjugation pathway by mediating the deneddylation of the cullin subunit of SCF-type E3 ubiquitin-protein ligase complexes. The CSN complex is involved in the regulation of the circadian clock through its control of the stability of the SCF(FWD1) complex. In Neurospora crassa (strain ATCC 24698 / 74-OR23-1A / CBS 708.71 / DSM 1257 / FGSC 987), this protein is COP9 signalosome complex subunit 7a (csn-7a).